A 271-amino-acid polypeptide reads, in one-letter code: Bis(5'-nucleosyl)-tetraphosphatase, symmetrical (271 aa).

The protein belongs to the Ap4A hydrolase family.

It catalyses the reaction P(1),P(4)-bis(5'-adenosyl) tetraphosphate + H2O = 2 ADP + 2 H(+). In terms of biological role, hydrolyzes diadenosine 5',5'''-P1,P4-tetraphosphate to yield ADP. This Aliivibrio fischeri (strain MJ11) (Vibrio fischeri) protein is Bis(5'-nucleosyl)-tetraphosphatase, symmetrical.